The sequence spans 308 residues: 50 kDa gamma-zein (308 aa).

A signal peptide spans 1–19 (MKLVLVVLAFIALVSSVSC). The disordered stretch occupies residues 27-159 (CGQQQSHEQQ…QPQQPQQYQQ (133 aa)). The segment covering 55–119 (HHQQQQHQQQ…QHHQQSQGHV (65 aa)) has biased composition (low complexity). Residues 120-129 (QQHEQSHEQH) show a composition bias toward basic and acidic residues. A compositionally biased stretch (low complexity) spans 130-159 (QGQSHEQQHQQQFQGHDKQQQPQQPQQYQQ). Cys-286 carries the GPI-anchor amidated cysteine lipid modification. The propeptide at 287-308 (GLYHSYYQNNPCSSNDISGVCN) is removed in mature form.

This sequence belongs to the gliadin/glutenin family. Interacts with OP10 (via N-terminus).

It localises to the cell membrane. Its function is as follows. Zeins are major seed storage proteins. This chain is 50 kDa gamma-zein, found in Zea mays (Maize).